Consider the following 185-residue polypeptide: Crossover junction endodeoxyribonuclease RuvC (185 aa).

Active-site residues include D7, E66, and D137. The Mg(2+) site is built by D7, E66, and D137.

Belongs to the RuvC family. As to quaternary structure, homodimer which binds Holliday junction (HJ) DNA. The HJ becomes 2-fold symmetrical on binding to RuvC with unstacked arms; it has a different conformation from HJ DNA in complex with RuvA. In the full resolvosome a probable DNA-RuvA(4)-RuvB(12)-RuvC(2) complex forms which resolves the HJ. Mg(2+) serves as cofactor.

Its subcellular location is the cytoplasm. It carries out the reaction Endonucleolytic cleavage at a junction such as a reciprocal single-stranded crossover between two homologous DNA duplexes (Holliday junction).. Its function is as follows. The RuvA-RuvB-RuvC complex processes Holliday junction (HJ) DNA during genetic recombination and DNA repair. Endonuclease that resolves HJ intermediates. Cleaves cruciform DNA by making single-stranded nicks across the HJ at symmetrical positions within the homologous arms, yielding a 5'-phosphate and a 3'-hydroxyl group; requires a central core of homology in the junction. The consensus cleavage sequence is 5'-(A/T)TT(C/G)-3'. Cleavage occurs on the 3'-side of the TT dinucleotide at the point of strand exchange. HJ branch migration catalyzed by RuvA-RuvB allows RuvC to scan DNA until it finds its consensus sequence, where it cleaves and resolves the cruciform DNA. The protein is Crossover junction endodeoxyribonuclease RuvC of Anaeromyxobacter dehalogenans (strain 2CP-1 / ATCC BAA-258).